The sequence spans 152 residues: Transmembrane protein 35B (152 aa).

Residues 1–21 form the signal peptide; the sequence is MLVSLGALRVLLGIFFTLTGA. 3 helical membrane passes run 62–82, 85–105, and 111–131; these read AAVG…PPVL, ISNV…VVLE, and YIPA…QFLV.

The protein belongs to the DoxX family.

The protein localises to the membrane. The protein is Transmembrane protein 35B of Rattus norvegicus (Rat).